Consider the following 426-residue polypeptide: 3-phosphoshikimate 1-carboxyvinyltransferase (426 aa).

3-phosphoshikimate contacts are provided by lysine 22, serine 23, and arginine 27. Residue lysine 22 coordinates phosphoenolpyruvate. The phosphoenolpyruvate site is built by glycine 96 and arginine 124. Positions 170, 171, 172, 198, 314, 337, and 341 each coordinate 3-phosphoshikimate. Phosphoenolpyruvate is bound at residue glutamine 172. The Proton acceptor role is filled by aspartate 314. Residues arginine 345, arginine 387, and lysine 412 each contribute to the phosphoenolpyruvate site.

Belongs to the EPSP synthase family. In terms of assembly, monomer.

The protein resides in the cytoplasm. The catalysed reaction is 3-phosphoshikimate + phosphoenolpyruvate = 5-O-(1-carboxyvinyl)-3-phosphoshikimate + phosphate. It functions in the pathway metabolic intermediate biosynthesis; chorismate biosynthesis; chorismate from D-erythrose 4-phosphate and phosphoenolpyruvate: step 6/7. Functionally, catalyzes the transfer of the enolpyruvyl moiety of phosphoenolpyruvate (PEP) to the 5-hydroxyl of shikimate-3-phosphate (S3P) to produce enolpyruvyl shikimate-3-phosphate and inorganic phosphate. The polypeptide is 3-phosphoshikimate 1-carboxyvinyltransferase (Shewanella baltica (strain OS195)).